Reading from the N-terminus, the 37-residue chain is Large ribosomal subunit protein bL36 (37 aa).

It belongs to the bacterial ribosomal protein bL36 family.

This chain is Large ribosomal subunit protein bL36, found in Gloeothece citriformis (strain PCC 7424) (Cyanothece sp. (strain PCC 7424)).